A 179-amino-acid polypeptide reads, in one-letter code: Ribosome maturation factor RimM (179 aa).

The PRC barrel domain occupies 96–179; sequence DNEFYWVDLI…KITVDWGLDY (84 aa).

The protein belongs to the RimM family. In terms of assembly, binds ribosomal protein uS19.

The protein resides in the cytoplasm. An accessory protein needed during the final step in the assembly of 30S ribosomal subunit, possibly for assembly of the head region. Essential for efficient processing of 16S rRNA. May be needed both before and after RbfA during the maturation of 16S rRNA. It has affinity for free ribosomal 30S subunits but not for 70S ribosomes. The sequence is that of Ribosome maturation factor RimM from Janthinobacterium sp. (strain Marseille) (Minibacterium massiliensis).